We begin with the raw amino-acid sequence, 309 residues long: tRNA-cytidine(32) 2-sulfurtransferase (309 aa).

A PP-loop motif motif is present at residues 47 to 52; that stretch reads SGGKDS. [4Fe-4S] cluster-binding residues include C122, C125, and C213.

It belongs to the TtcA family. Homodimer. Requires Mg(2+) as cofactor. The cofactor is [4Fe-4S] cluster.

The protein resides in the cytoplasm. The catalysed reaction is cytidine(32) in tRNA + S-sulfanyl-L-cysteinyl-[cysteine desulfurase] + AH2 + ATP = 2-thiocytidine(32) in tRNA + L-cysteinyl-[cysteine desulfurase] + A + AMP + diphosphate + H(+). Its pathway is tRNA modification. Catalyzes the ATP-dependent 2-thiolation of cytidine in position 32 of tRNA, to form 2-thiocytidine (s(2)C32). The sulfur atoms are provided by the cysteine/cysteine desulfurase (IscS) system. The chain is tRNA-cytidine(32) 2-sulfurtransferase from Erwinia tasmaniensis (strain DSM 17950 / CFBP 7177 / CIP 109463 / NCPPB 4357 / Et1/99).